The chain runs to 195 residues: Probable GTP-binding protein EngB (195 aa).

Residues 24–195 (ELPEIALAGR…EAWDAILEKL (172 aa)) form the EngB-type G domain. Residues 32 to 39 (GRSNVGKS), 59 to 63 (GKTQL), 77 to 80 (DVPG), 144 to 147 (TKAD), and 176 to 178 (FSS) contribute to the GTP site. Positions 39 and 61 each coordinate Mg(2+).

The protein belongs to the TRAFAC class TrmE-Era-EngA-EngB-Septin-like GTPase superfamily. EngB GTPase family. Mg(2+) serves as cofactor.

In terms of biological role, necessary for normal cell division and for the maintenance of normal septation. This is Probable GTP-binding protein EngB from Streptococcus pneumoniae (strain P1031).